The primary structure comprises 207 residues: N-(5'-phosphoribosyl)anthranilate isomerase (207 aa).

Belongs to the TrpF family.

The catalysed reaction is N-(5-phospho-beta-D-ribosyl)anthranilate = 1-(2-carboxyphenylamino)-1-deoxy-D-ribulose 5-phosphate. Its pathway is amino-acid biosynthesis; L-tryptophan biosynthesis; L-tryptophan from chorismate: step 3/5. This is N-(5'-phosphoribosyl)anthranilate isomerase from Petrotoga mobilis (strain DSM 10674 / SJ95).